Here is a 98-residue protein sequence, read N- to C-terminus: MASTNFRPLHDRVVVRRVESEEKTKGGIIIPDTAKEKPQEGEIVAVGSGARDESGKVVPLDVKAGDRILFGKWSGTEVKINGEDLLIMKEADIMGVIG.

It belongs to the GroES chaperonin family. In terms of assembly, heptamer of 7 subunits arranged in a ring. Interacts with the chaperonin GroEL.

The protein localises to the cytoplasm. In terms of biological role, together with the chaperonin GroEL, plays an essential role in assisting protein folding. The GroEL-GroES system forms a nano-cage that allows encapsulation of the non-native substrate proteins and provides a physical environment optimized to promote and accelerate protein folding. GroES binds to the apical surface of the GroEL ring, thereby capping the opening of the GroEL channel. The polypeptide is Co-chaperonin GroES 1 (Rhizobium meliloti (strain 1021) (Ensifer meliloti)).